Reading from the N-terminus, the 417-residue chain is Serine hydroxymethyltransferase (417 aa).

Residues Leu-121 and 125–127 (GHL) contribute to the (6S)-5,6,7,8-tetrahydrofolate site. Lys-229 is subject to N6-(pyridoxal phosphate)lysine. (6S)-5,6,7,8-tetrahydrofolate is bound at residue 355–357 (SPF).

This sequence belongs to the SHMT family. Homodimer. Pyridoxal 5'-phosphate serves as cofactor.

The protein localises to the cytoplasm. The enzyme catalyses (6R)-5,10-methylene-5,6,7,8-tetrahydrofolate + glycine + H2O = (6S)-5,6,7,8-tetrahydrofolate + L-serine. It participates in one-carbon metabolism; tetrahydrofolate interconversion. It functions in the pathway amino-acid biosynthesis; glycine biosynthesis; glycine from L-serine: step 1/1. In terms of biological role, catalyzes the reversible interconversion of serine and glycine with tetrahydrofolate (THF) serving as the one-carbon carrier. This reaction serves as the major source of one-carbon groups required for the biosynthesis of purines, thymidylate, methionine, and other important biomolecules. Also exhibits THF-independent aldolase activity toward beta-hydroxyamino acids, producing glycine and aldehydes, via a retro-aldol mechanism. The protein is Serine hydroxymethyltransferase of Shewanella denitrificans (strain OS217 / ATCC BAA-1090 / DSM 15013).